Consider the following 493-residue polypeptide: Rho guanine nucleotide exchange factor 9 (493 aa).

The region spanning 15–74 (DSIVSAEAVWDHVTMANRGVAFKAGDVIKVLDASNKDWWWGQIDDEEGWFPASFVRLWVN) is the SH3 domain. An interaction with GPHN region spans residues 107–117 (RDQMRANVINE). In terms of domain architecture, DH spans 110–294 (MRANVINEIM…RNVTQQINER (185 aa)). The PH domain maps to 325–432 (ELIYTGEMAW…WLRAFREERK (108 aa)). A disordered region spans residues 453–473 (AMTVRKASKQKGRVGEEENQS).

As to quaternary structure, interacts with GPHN. In terms of tissue distribution, detected in brain, throughout the gray matter. Detected at low levels in heart and skeletal muscle.

The protein localises to the cytoplasm. It is found in the postsynaptic density. Acts as a guanine nucleotide exchange factor (GEF) for CDC42. Promotes formation of GPHN clusters. The sequence is that of Rho guanine nucleotide exchange factor 9 (Arhgef9) from Rattus norvegicus (Rat).